The following is a 133-amino-acid chain: Ribosome-binding factor A (133 aa).

It belongs to the RbfA family. In terms of assembly, monomer. Binds 30S ribosomal subunits, but not 50S ribosomal subunits or 70S ribosomes.

The protein resides in the cytoplasm. Its function is as follows. One of several proteins that assist in the late maturation steps of the functional core of the 30S ribosomal subunit. Associates with free 30S ribosomal subunits (but not with 30S subunits that are part of 70S ribosomes or polysomes). Required for efficient processing of 16S rRNA. May interact with the 5'-terminal helix region of 16S rRNA. This is Ribosome-binding factor A from Shigella boydii serotype 18 (strain CDC 3083-94 / BS512).